Consider the following 417-residue polypeptide: Glutamyl-tRNA reductase (417 aa).

Substrate-binding positions include 49 to 52 (TCNR), Ser-107, 112 to 114 (EEQ), and Gln-118. Residue Cys-50 is the Nucleophile of the active site. 187–192 (GTGEVS) lines the NADP(+) pocket.

The protein belongs to the glutamyl-tRNA reductase family. As to quaternary structure, homodimer.

The enzyme catalyses (S)-4-amino-5-oxopentanoate + tRNA(Glu) + NADP(+) = L-glutamyl-tRNA(Glu) + NADPH + H(+). It functions in the pathway porphyrin-containing compound metabolism; protoporphyrin-IX biosynthesis; 5-aminolevulinate from L-glutamyl-tRNA(Glu): step 1/2. Its function is as follows. Catalyzes the NADPH-dependent reduction of glutamyl-tRNA(Glu) to glutamate 1-semialdehyde (GSA). The chain is Glutamyl-tRNA reductase from Cenarchaeum symbiosum (strain A).